Reading from the N-terminus, the 714-residue chain is Hormonally up-regulated neu tumor-associated kinase (714 aa).

Low complexity predominate over residues 1–15; it reads MPAAAGDGLLGEPAA. The disordered stretch occupies residues 1–26; the sequence is MPAAAGDGLLGEPAAPGGGGGAEDAA. Positions 62–320 constitute a Protein kinase domain; that stretch reads LIGSRKLGEG…IQQALANRWL (259 aa). ATP contacts are provided by residues 68 to 76 and lysine 91; that span reads LGEGSFAKV. Residue aspartate 186 is the Proton acceptor of the active site. Residues 437-461 are compositionally biased toward basic and acidic residues; it reads KKPKEQEKRGDFLHRPFSKKLDKNL. 3 disordered regions span residues 437–471, 518–552, and 590–615; these read KKPK…SGSL, MEFI…HKED, and ARRN…HTPL. A compositionally biased stretch (low complexity) spans 599-611; that stretch reads LSPGLPSGSMSPL.

This sequence belongs to the protein kinase superfamily. CAMK Ser/Thr protein kinase family. SNF1 subfamily.

It catalyses the reaction L-seryl-[protein] + ATP = O-phospho-L-seryl-[protein] + ADP + H(+). It carries out the reaction L-threonyl-[protein] + ATP = O-phospho-L-threonyl-[protein] + ADP + H(+). This chain is Hormonally up-regulated neu tumor-associated kinase (HUNK), found in Homo sapiens (Human).